Here is a 151-residue protein sequence, read N- to C-terminus: Cytochrome c-type biogenesis protein CcmE 1 (151 aa).

Topologically, residues 1-8 (MNPLRKKR) are cytoplasmic. The chain crosses the membrane as a helical; Signal-anchor for type II membrane protein span at residues 9–29 (LIIILAILVGVGAAVGLALSA). The Periplasmic segment spans residues 30-151 (LQQNINLFYT…QSAPTPAKEG (122 aa)). The heme site is built by His124 and Tyr128. The disordered stretch occupies residues 131 to 151 (PEVTKALKDSGQSAPTPAKEG).

Belongs to the CcmE/CycJ family.

It is found in the cell inner membrane. Functionally, heme chaperone required for the biogenesis of c-type cytochromes. Transiently binds heme delivered by CcmC and transfers the heme to apo-cytochromes in a process facilitated by CcmF and CcmH. The sequence is that of Cytochrome c-type biogenesis protein CcmE 1 from Pseudomonas fluorescens (strain Pf0-1).